Consider the following 444-residue polypeptide: Phosphoglucosamine mutase (444 aa).

Residue S100 is the Phosphoserine intermediate of the active site. Positions 100, 234, 236, and 238 each coordinate Mg(2+). S100 is subject to Phosphoserine.

It belongs to the phosphohexose mutase family. It depends on Mg(2+) as a cofactor. In terms of processing, activated by phosphorylation.

The enzyme catalyses alpha-D-glucosamine 1-phosphate = D-glucosamine 6-phosphate. In terms of biological role, catalyzes the conversion of glucosamine-6-phosphate to glucosamine-1-phosphate. The protein is Phosphoglucosamine mutase of Rubrobacter xylanophilus (strain DSM 9941 / JCM 11954 / NBRC 16129 / PRD-1).